A 545-amino-acid chain; its full sequence is Probable quinate permease (545 aa).

Residues 1-22 (MSILSLVEDRPTPKEVYNWRIY) are Cytoplasmic-facing. The chain crosses the membrane as a helical span at residues 23–43 (LLAAVASFTSCMIGYDSAFIG). Topologically, residues 44-66 (TTISLQSFKDEFNWDAMSTDKQN) are extracellular. The chain crosses the membrane as a helical span at residues 67-87 (LISANIVSLYQAGAFFGAFFA). Residues 88–97 (YPMGHFWGRR) are Cytoplasmic-facing. The helical transmembrane segment at 98–118 (WGLFVAALVFTLGAGLMLGAN) threads the bilayer. Residues 119-130 (GDRGLGLIYGGR) are Extracellular-facing. A helical membrane pass occupies residues 131–151 (VLAGLGVGAGSNITPIYISEL). Over 152–159 (APPAIRGR) the chain is Cytoplasmic. A helical transmembrane segment spans residues 160–180 (LVGVYELGWQIGGLVGFWICF). Residues 181 to 193 (GVDDTLAPSHKQW) are Extracellular-facing. Residues 194–214 (IIPFAVQLIPSGLLLLGILFV) traverse the membrane as a helical segment. Residues 215–285 (RESPRWLFLR…VWSNKRIMYR (71 aa)) are Cytoplasmic-facing. A helical membrane pass occupies residues 286 to 306 (LFLGSMLFLWQNGSGINAINY). Topologically, residues 307-325 (YSPTVFKSIGLRGANTSLL) are extracellular. Residues 326 to 346 (TTGIFGVVKTVVTFVWLLWLI) form a helical membrane-spanning segment. Residues 347 to 352 (DRLGRR) lie on the Cytoplasmic side of the membrane. A helical transmembrane segment spans residues 353 to 373 (LLLMIGAAGGSVCLWIVGAYI). Residues 374-384 (KVAKPTERDPD) are Extracellular-facing. Residues 385 to 405 (APLDGGGIAAMFFFYLWTVFY) form a helical membrane-spanning segment. The Cytoplasmic portion of the chain corresponds to 406–457 (TPSWNGTPWVMNSEMFDPNVRSLAQACAAGSNWLWNFLISRFTPQMFAKMEY). A helical transmembrane segment spans residues 458-478 (GVYFFFASLMILSIVFVFFLI). Topologically, residues 479 to 545 (PETKGIPLES…VEQAESVPKA (67 aa)) are extracellular. Positions 520-545 (IEESGYTKSDAQQVERVEQAESVPKA) are disordered.

This sequence belongs to the major facilitator superfamily. Sugar transporter (TC 2.A.1.1) family. Interacts with creB. Post-translationally, ubiquitinated. Deubiquitinated by creB, probably to control its activity or amount.

The protein localises to the cell membrane. In terms of biological role, integral membrane transporter that imports quinic acid to be catabolized as a carbon source. This chain is Probable quinate permease (qutD), found in Aspergillus terreus (strain NIH 2624 / FGSC A1156).